A 57-amino-acid chain; its full sequence is COP9 signalosome complex subunit 9 (57 aa).

The protein belongs to the CSN9 family. Component of the CSN complex, probably composed of cops1, cops2, cops3, cops4, cops5, cops6, cops7, cops8 and cops9.

The protein resides in the nucleus. Its subcellular location is the cytoplasm. The protein localises to the nucleoplasm. Functionally, component of the COP9 signalosome complex (CSN), a complex involved in various cellular and developmental processes. The CSN complex is an essential regulator of the ubiquitin (Ubl) conjugation pathway by mediating the deneddylation of the cullin subunits of SCF-type E3 ligase complexes, leading to decrease the Ubl ligase activity. May play a role in cell proliferation. This chain is COP9 signalosome complex subunit 9, found in Xenopus tropicalis (Western clawed frog).